Consider the following 316-residue polypeptide: Small ribosomal subunit biogenesis GTPase RsgA (316 aa).

Positions 83-248 constitute a CP-type G domain; it reads DQYKSKLFAA…LIDSPGFQEF (166 aa). GTP is bound by residues 131–134 and 185–193; these read NKTD and GQSGMGKST. Cys272, Cys277, His279, and Cys285 together coordinate Zn(2+).

The protein belongs to the TRAFAC class YlqF/YawG GTPase family. RsgA subfamily. As to quaternary structure, monomer. Associates with 30S ribosomal subunit, binds 16S rRNA. Requires Zn(2+) as cofactor.

It localises to the cytoplasm. Functionally, one of several proteins that assist in the late maturation steps of the functional core of the 30S ribosomal subunit. Helps release RbfA from mature subunits. May play a role in the assembly of ribosomal proteins into the subunit. Circularly permuted GTPase that catalyzes slow GTP hydrolysis, GTPase activity is stimulated by the 30S ribosomal subunit. The protein is Small ribosomal subunit biogenesis GTPase RsgA of Paraburkholderia xenovorans (strain LB400).